A 287-amino-acid polypeptide reads, in one-letter code: Efem/EfeO family lipoprotein (287 aa).

Positions 1–17 (MKKLPTILLASSLLLAA) are cleaved as a signal peptide. C18 is lipidated: N-palmitoyl cysteine. A lipid anchor (S-diacylglycerol cysteine) is attached at C18. A disordered region spans residues 20 to 50 (NNSHSDDNSNKDKQSQSSKGENKASLQKATK). Basic and acidic residues predominate over residues 23–33 (HSDDNSNKDKQ).

It belongs to the EfeM/EfeO family.

The protein resides in the cell membrane. This Staphylococcus haemolyticus (strain JCSC1435) protein is Efem/EfeO family lipoprotein.